The chain runs to 445 residues: Methylenetetrahydrofolate--tRNA-(uracil-5-)-methyltransferase TrmFO (445 aa).

8–13 (GAGLAG) serves as a coordination point for FAD.

This sequence belongs to the MnmG family. TrmFO subfamily. FAD is required as a cofactor.

It is found in the cytoplasm. It catalyses the reaction uridine(54) in tRNA + (6R)-5,10-methylene-5,6,7,8-tetrahydrofolate + NADH + H(+) = 5-methyluridine(54) in tRNA + (6S)-5,6,7,8-tetrahydrofolate + NAD(+). It carries out the reaction uridine(54) in tRNA + (6R)-5,10-methylene-5,6,7,8-tetrahydrofolate + NADPH + H(+) = 5-methyluridine(54) in tRNA + (6S)-5,6,7,8-tetrahydrofolate + NADP(+). Catalyzes the folate-dependent formation of 5-methyl-uridine at position 54 (M-5-U54) in all tRNAs. This chain is Methylenetetrahydrofolate--tRNA-(uracil-5-)-methyltransferase TrmFO, found in Rhodobacter capsulatus (strain ATCC BAA-309 / NBRC 16581 / SB1003).